A 248-amino-acid chain; its full sequence is UPF0736 protein BCE_1296 (248 aa).

Belongs to the UPF0736 family.

The polypeptide is UPF0736 protein BCE_1296 (Bacillus cereus (strain ATCC 10987 / NRS 248)).